We begin with the raw amino-acid sequence, 417 residues long: 4-hydroxy-3-methylbut-2-en-1-yl diphosphate synthase (flavodoxin) (417 aa).

The [4Fe-4S] cluster site is built by Cys307, Cys310, Cys353, and Glu360.

Belongs to the IspG family. Requires [4Fe-4S] cluster as cofactor.

It catalyses the reaction (2E)-4-hydroxy-3-methylbut-2-enyl diphosphate + oxidized [flavodoxin] + H2O + 2 H(+) = 2-C-methyl-D-erythritol 2,4-cyclic diphosphate + reduced [flavodoxin]. It functions in the pathway isoprenoid biosynthesis; isopentenyl diphosphate biosynthesis via DXP pathway; isopentenyl diphosphate from 1-deoxy-D-xylulose 5-phosphate: step 5/6. Its function is as follows. Converts 2C-methyl-D-erythritol 2,4-cyclodiphosphate (ME-2,4cPP) into 1-hydroxy-2-methyl-2-(E)-butenyl 4-diphosphate. The polypeptide is 4-hydroxy-3-methylbut-2-en-1-yl diphosphate synthase (flavodoxin) (Xylella fastidiosa (strain 9a5c)).